A 341-amino-acid chain; its full sequence is HTH-type transcriptional repressor PurR (341 aa).

An HTH lacI-type domain is found at 2-56 (ATIKDVAKRAGVSTTTVSHVINKTRFVAEETKAAVGAAIKELHYSPSAVARSLKV). Residues 4–23 (IKDVAKRAGVSTTTVSHVIN) constitute a DNA-binding region (H-T-H motif). Residues 48-56 (SAVARSLKV) mediate DNA binding. Hypoxanthine-binding residues include Tyr73, Arg190, Thr192, Phe221, and Asp275.

Homodimer.

It participates in purine metabolism; purine nucleotide biosynthesis [regulation]. Is the main repressor of the genes involved in the de novo synthesis of purine nucleotides, regulating purB, purC, purEK, purF, purHD, purL, purMN and guaBA expression. PurR is allosterically activated to bind its cognate DNA by binding the purine corepressors, hypoxanthine or guanine, thereby effecting transcription repression. The chain is HTH-type transcriptional repressor PurR from Serratia proteamaculans (strain 568).